The sequence spans 364 residues: Apelin receptor (364 aa).

Residues 1–39 (MATDEFSSSTTPSYDYYDYTNESGLPPCDETDWDLSYSL) are Extracellular-facing. N-linked (GlcNAc...) asparagine glycosylation is present at Asn21. Cystine bridges form between Cys28/Cys288 and Cys110/Cys187. The chain crosses the membrane as a helical span at residues 40–60 (LPVFYMIVFVLGLSGNGVVIF). Topologically, residues 61–78 (TVWKAKPKRRSADTYIGN) are cytoplasmic. A helical membrane pass occupies residues 79–99 (LALADLAFVVTLPLWATYTAL). Residues 100–112 (GFHWPFGSALCKL) lie on the Extracellular side of the membrane. Residues 113 to 133 (SSYLVLLNMFASVFCLTCLSF) form a helical membrane-spanning segment. Residues 134–153 (DRYLAIVHSLSSAKLRSRSS) are Cytoplasmic-facing. The chain crosses the membrane as a helical span at residues 154-174 (ILVSLAVIWLFSGLLALPSLI). Residues 175–201 (LRDTRVEGNNTICDLDFSGVSSKENEN) are Extracellular-facing. Residue Asn183 is glycosylated (N-linked (GlcNAc...) asparagine). Residues 202–222 (FWIGGLSILTTVPGFLLPLLL) traverse the membrane as a helical segment. Residues 223-250 (MTIFYCFIGGKVTMHFQNLKKEEQKKKR) lie on the Cytoplasmic side of the membrane. Residues 251 to 271 (LLKIIITLVVVFAICWLPFHI) traverse the membrane as a helical segment. At 272–298 (LKTIHFLDLMGFLELSCSTQNIIVSLH) the chain is on the extracellular side. Residues 299–319 (PYATCLAYINSCLNPFLYAFF) traverse the membrane as a helical segment. Topologically, residues 320–364 (DLRFRSQCFFFFGFKKALQGHLSNTSSSLSAQTQKSEIHSLATKV) are cytoplasmic.

It belongs to the G-protein coupled receptor 1 family.

It is found in the cell membrane. G protein-coupled receptor for peptide hormones apelin (apln) and apelin receptor early endogenous ligand (apela), that plays a role in the regulation of normal cardiovascular function and fluid homeostasis. When acting as apelin receptor, activates both G(i) protein pathway that inhibits adenylate cyclase activity, and the beta-arrestin pathway that promotes internalization of the receptor. Also functions as mechanoreceptor that is activated by pathological stimuli in a G-protein-independent fashion to induce beta-arrestin signaling, hence eliciting cardiac hypertrophy. However, the presence of apelin ligand blunts cardiac hypertrophic induction from APLNR/APJ on response to pathological stimuli. Plays a key role in early development such as gastrulation, blood vessels formation and heart morphogenesis by acting as a receptor for apela hormone, promoting endoderm and mesendoderm cell migration and regulating the migration of cells fated to become myocardial progenitors, respectively. Promotes angioblast migration toward the embryonic midline, i.e. the position of the future vessel formation, during vasculogenesis. May promote sinus venosus (SV)-derived endothelial cells migration into the developing heart to promote coronary blood vessel development. Required for cardiovascular development, particularly for intersomitic vein angiogenesis. Plays also a role in various processes in adults such as regulation of blood vessel formation, blood pressure, heart contractility, and heart failure. Acts upstream of the i/o type of G-alpha proteins in the differentiation of endothelium, erythroid cells, myeloid cells and cardiomyocytes. This Xenopus tropicalis (Western clawed frog) protein is Apelin receptor (aplnr).